The sequence spans 215 residues: Porin MspC (215 aa).

The first 31 residues, 1-31, serve as a signal peptide directing secretion; that stretch reads MKAISRVLIAMISALAAAVAGLFVSAGTSHA.

Belongs to the mycobacterial porin (TC 1.B.24) family. In terms of assembly, octamers. Probably forms a goblet with the wide end on the exterior of the outer membrane and a central channel. It is not known if mixed oligomers of MspC with other Msp subunits form in vivo.

Its subcellular location is the cell outer membrane. The protein resides in the secreted. It localises to the cell wall. A constitutively expressed secondary porin, forms a water-filled channel which favors the permeation of cations and less efficiently phosphate. There are about 2400 porins in wild-type, 800 in an mspA deletion and 150 in a double mspA-mspC deletion. This chain is Porin MspC (mspC), found in Mycolicibacterium smegmatis (strain ATCC 700084 / mc(2)155) (Mycobacterium smegmatis).